The following is a 343-amino-acid chain: 4-hydroxy-2-oxovalerate aldolase 2 (343 aa).

Residues 8-260 (ITVHDMSLRD…ETGVDVFAIS (253 aa)) form the Pyruvate carboxyltransferase domain. Residue 16–17 (RD) coordinates substrate. Residue aspartate 17 participates in Mn(2+) binding. Residue histidine 20 is the Proton acceptor of the active site. Substrate-binding residues include serine 170 and histidine 199. Positions 199 and 201 each coordinate Mn(2+). Substrate is bound at residue tyrosine 290.

Belongs to the 4-hydroxy-2-oxovalerate aldolase family.

The enzyme catalyses (S)-4-hydroxy-2-oxopentanoate = acetaldehyde + pyruvate. This is 4-hydroxy-2-oxovalerate aldolase 2 from Burkholderia lata (strain ATCC 17760 / DSM 23089 / LMG 22485 / NCIMB 9086 / R18194 / 383).